Reading from the N-terminus, the 178-residue chain is Peptide deformylase 2 (178 aa).

Cys101 and His143 together coordinate Fe cation. The active site involves Glu144. A Fe cation-binding site is contributed by His147.

It belongs to the polypeptide deformylase family. It depends on Fe(2+) as a cofactor.

It catalyses the reaction N-terminal N-formyl-L-methionyl-[peptide] + H2O = N-terminal L-methionyl-[peptide] + formate. In terms of biological role, removes the formyl group from the N-terminal Met of newly synthesized proteins. Requires at least a dipeptide for an efficient rate of reaction. N-terminal L-methionine is a prerequisite for activity but the enzyme has broad specificity at other positions. This is Peptide deformylase 2 from Pseudomonas putida (strain ATCC 47054 / DSM 6125 / CFBP 8728 / NCIMB 11950 / KT2440).